Reading from the N-terminus, the 122-residue chain is Small ribosomal subunit protein uS13 (122 aa).

The segment at 99–122 (RGQRTHTNARTRKGPAKAIAGKKK) is disordered.

The protein belongs to the universal ribosomal protein uS13 family. As to quaternary structure, part of the 30S ribosomal subunit. Forms a loose heterodimer with protein S19. Forms two bridges to the 50S subunit in the 70S ribosome.

Its function is as follows. Located at the top of the head of the 30S subunit, it contacts several helices of the 16S rRNA. In the 70S ribosome it contacts the 23S rRNA (bridge B1a) and protein L5 of the 50S subunit (bridge B1b), connecting the 2 subunits; these bridges are implicated in subunit movement. Contacts the tRNAs in the A and P-sites. The protein is Small ribosomal subunit protein uS13 of Sinorhizobium fredii (strain NBRC 101917 / NGR234).